Consider the following 223-residue polypeptide: DNA-directed RNA polymerase III subunit RPC7 (223 aa).

Residues 110–223 form a disordered region; it reads MMPRNKCKKA…SDDNMDEATY (114 aa). Over residues 114–125 the composition is skewed to basic residues; it reads NKCKKAGPKPKK. Residue Thr-133 is modified to Phosphothreonine. Positions 140 to 155 are enriched in basic and acidic residues; sequence DVLKKMEELEKRGDGE. Ser-157 carries the phosphoserine modification. Residues 164 to 173 are compositionally biased toward basic and acidic residues; it reads KEGSKEKSKE. Acidic residues-rich tracts occupy residues 174-198 and 205-223; these read GDDDDDDDAAEQEEYDEEEQEEEND and EDGDDFGADSDDNMDEATY.

It belongs to the eukaryotic RPC7 RNA polymerase subunit family. As to quaternary structure, component of the RNA polymerase III complex consisting of 17 subunits: a ten-subunit horseshoe-shaped catalytic core composed of POLR3A/RPC1, POLR3B/RPC2, POLR1C/RPAC1, POLR1D/RPAC2, POLR3K/RPC10, POLR2E/RPABC1, POLR2F/RPABC2, POLR2H/RPABC3, POLR2K/RPABC4 and POLR2L/RPABC5; a mobile stalk composed of two subunits POLR3H/RPC8 and CRCP/RPC9, protruding from the core and functioning primarily in transcription initiation; and additional subunits homologous to general transcription factors of the RNA polymerase II machinery, POLR3C/RPC3-POLR3F/RPC6-POLR3G/RPC7 heterotrimer required for transcription initiation and POLR3D/RPC4-POLR3E/RPC5 heterodimer involved in both transcription initiation and termination. Directly interacts with POLR3C/RPC62. Also found in a trimeric complex with POLR3C/RPC3 and POLR3GL. Barely detectable in differentiated tissues. Expressed in embryonic stem cells and in other dividing cells, such as some tumor cell lines.

It is found in the nucleus. The protein resides in the cytoplasm. DNA-dependent RNA polymerase catalyzes the transcription of DNA into RNA using the four ribonucleoside triphosphates as substrates. Specific peripheric component of RNA polymerase III (Pol III) which synthesizes small non-coding RNAs including 5S rRNA, snRNAs, tRNAs and miRNAs from at least 500 distinct genomic loci. Acts as a long tether that bridges POLR3C/RPC3-POLR3F/RPC6-POLR3G/RPC7 heterotrimer and the mobile stalk of Pol III, coordinating the dynamics of Pol III stalk and clamp modules during the transition from apo to elongation state. Pol III exists as two alternative complexes defined by the mutually exclusive incorporation of subunit POLR3G/RPC7alpha or POLR3GL/RPC7beta. POLR3G/RPC7alpha modulates Pol III transcriptome by specifically enhancing the transcription of snaR-A non-coding RNAs. At resting state, occupies the active site of apo Pol III and keeps Pol III in an autoinhibitory mode, preventing non-specific transcription. Pol III plays a key role in sensing and limiting infection by intracellular bacteria and DNA viruses. Acts as a nuclear and cytosolic DNA sensor involved in innate immune response. Can sense non-self dsDNA that serves as template for transcription into dsRNA. The non-self RNA polymerase III transcripts, such as Epstein-Barr virus-encoded RNAs (EBERs), induce type I interferon and NF-kappa-B through the RIG-I pathway. The sequence is that of DNA-directed RNA polymerase III subunit RPC7 from Homo sapiens (Human).